A 364-amino-acid chain; its full sequence is Lipoyl synthase, mitochondrial (364 aa).

The [4Fe-4S] cluster site is built by Cys-99, Cys-104, Cys-110, Cys-130, Cys-134, Cys-137, and Ser-345. One can recognise a Radical SAM core domain in the interval 116–334 (HSTQTATIML…EQRGNELGFL (219 aa)).

It belongs to the radical SAM superfamily. Lipoyl synthase family. [4Fe-4S] cluster serves as cofactor.

Its subcellular location is the mitochondrion. It carries out the reaction [[Fe-S] cluster scaffold protein carrying a second [4Fe-4S](2+) cluster] + N(6)-octanoyl-L-lysyl-[protein] + 2 oxidized [2Fe-2S]-[ferredoxin] + 2 S-adenosyl-L-methionine + 4 H(+) = [[Fe-S] cluster scaffold protein] + N(6)-[(R)-dihydrolipoyl]-L-lysyl-[protein] + 4 Fe(3+) + 2 hydrogen sulfide + 2 5'-deoxyadenosine + 2 L-methionine + 2 reduced [2Fe-2S]-[ferredoxin]. It functions in the pathway protein modification; protein lipoylation via endogenous pathway; protein N(6)-(lipoyl)lysine from octanoyl-[acyl-carrier-protein]: step 2/2. Its function is as follows. Catalyzes the radical-mediated insertion of two sulfur atoms into the C-6 and C-8 positions of the octanoyl moiety bound to the lipoyl domains of lipoate-dependent enzymes, thereby converting the octanoylated domains into lipoylated derivatives. The chain is Lipoyl synthase, mitochondrial from Drosophila mojavensis (Fruit fly).